Here is a 233-residue protein sequence, read N- to C-terminus: Nickel import system ATP-binding protein NikE (233 aa).

An ABC transporter domain is found at 2-228; sequence IELKHVTFGY…DRHPYTKELV (227 aa). Residue 35–42 participates in ATP binding; it reads GESGCGKS.

Belongs to the ABC transporter superfamily. As to quaternary structure, the complex is composed of two ATP-binding proteins (NikD and NikE), two transmembrane proteins (NikB and NikC) and a solute-binding protein (NikA).

The protein resides in the cell membrane. It carries out the reaction Ni(2+)(out) + ATP + H2O = Ni(2+)(in) + ADP + phosphate + H(+). Functionally, part of the ABC transporter complex NikABCDE (Opp2) involved in nickel import. Probably responsible for energy coupling to the transport system. In Staphylococcus aureus (strain MRSA252), this protein is Nickel import system ATP-binding protein NikE.